Reading from the N-terminus, the 436-residue chain is GTPase Der (436 aa).

EngA-type G domains are found at residues 4-167 (PVVA…KNIP) and 176-351 (VQFC…ENHS). GTP-binding positions include 10 to 17 (GRPNVGKS), 57 to 61 (DTGGI), 119 to 122 (NKVD), 182 to 189 (GRPNVGKS), 229 to 233 (DTAGM), and 294 to 297 (NKWD). Residues 352-436 (MRVQTNILND…PIRIFARARK (85 aa)) form the KH-like domain.

The protein belongs to the TRAFAC class TrmE-Era-EngA-EngB-Septin-like GTPase superfamily. EngA (Der) GTPase family. In terms of assembly, associates with the 50S ribosomal subunit.

In terms of biological role, GTPase that plays an essential role in the late steps of ribosome biogenesis. The protein is GTPase Der of Bacillus licheniformis (strain ATCC 14580 / DSM 13 / JCM 2505 / CCUG 7422 / NBRC 12200 / NCIMB 9375 / NCTC 10341 / NRRL NRS-1264 / Gibson 46).